Here is a 431-residue protein sequence, read N- to C-terminus: Histidine--tRNA ligase (431 aa).

It belongs to the class-II aminoacyl-tRNA synthetase family. In terms of assembly, homodimer.

It is found in the cytoplasm. The catalysed reaction is tRNA(His) + L-histidine + ATP = L-histidyl-tRNA(His) + AMP + diphosphate + H(+). The chain is Histidine--tRNA ligase from Neisseria meningitidis serogroup C / serotype 2a (strain ATCC 700532 / DSM 15464 / FAM18).